Reading from the N-terminus, the 372-residue chain is Cytochrome b (372 aa).

4 helical membrane-spanning segments follow: residues 25–45 (FGSM…FLAI), 69–90 (WIMQ…YTHI), 105–125 (WLSG…GYVL), and 170–190 (FFAL…VHII). Residues H75 and H89 each contribute to the heme b site. Residues H174 and H188 each coordinate heme b. H193 serves as a coordination point for a ubiquinone. The next 4 membrane-spanning stretches (helical) occupy residues 218–238 (YKDM…LSFS), 280–300 (LGGT…PFTH), 312–332 (LSQI…WTAS), and 339–358 (FITI…ILTP).

This sequence belongs to the cytochrome b family. In terms of assembly, the cytochrome bc1 complex contains 3 respiratory subunits (MT-CYB, CYC1 and UQCRFS1), 2 core proteins (UQCRC1 and UQCRC2) and probably 6 low-molecular weight proteins. Requires heme b as cofactor.

The protein resides in the mitochondrion inner membrane. In terms of biological role, component of the ubiquinol-cytochrome c reductase complex (complex III or cytochrome b-c1 complex) that is part of the mitochondrial respiratory chain. The b-c1 complex mediates electron transfer from ubiquinol to cytochrome c. Contributes to the generation of a proton gradient across the mitochondrial membrane that is then used for ATP synthesis. In Naja kaouthia (Monocled cobra), this protein is Cytochrome b (MT-CYB).